A 319-amino-acid polypeptide reads, in one-letter code: MSFSVETKEELARIQPRRRCCQLAELAALFRMDGSLQISGEQGLSLTVSTESASSARKIFRLIKAVFGVQTQILVRRKRRLKKSNVYVISLPARIGGRDVLQEMGITDSQGGFSFEPPSELLKRQCCRRAYLRGAFLGGGSVNSPEGTYHLEIITNDETHARILSELLHRFGLTAKVSQRKGWFIVYLKESEQIVEMLSIIGAHSALLNFENVRIVKGMRNQVNRLVNCETANLNKTVDAALRQTEMIRFVQNRIGFANLPSQLREVAELRLQYPDASLKELGQMLNPPVGKSGVNHRLRRLESLAEAFSRQGGVPRED.

The segment at residues 278 to 311 (SLKELGQMLNPPVGKSGVNHRLRRLESLAEAFSR) is a DNA-binding region (H-T-H motif).

The protein belongs to the WhiA family.

Its function is as follows. Involved in cell division and chromosome segregation. In Heliobacterium modesticaldum (strain ATCC 51547 / Ice1), this protein is Probable cell division protein WhiA.